Reading from the N-terminus, the 247-residue chain is 1-(5-phosphoribosyl)-5-[(5-phosphoribosylamino)methylideneamino] imidazole-4-carboxamide isomerase (247 aa).

Aspartate 8 functions as the Proton acceptor in the catalytic mechanism. The active-site Proton donor is aspartate 131.

This sequence belongs to the HisA/HisF family.

It localises to the cytoplasm. It carries out the reaction 1-(5-phospho-beta-D-ribosyl)-5-[(5-phospho-beta-D-ribosylamino)methylideneamino]imidazole-4-carboxamide = 5-[(5-phospho-1-deoxy-D-ribulos-1-ylimino)methylamino]-1-(5-phospho-beta-D-ribosyl)imidazole-4-carboxamide. It functions in the pathway amino-acid biosynthesis; L-histidine biosynthesis; L-histidine from 5-phospho-alpha-D-ribose 1-diphosphate: step 4/9. In Ralstonia pickettii (strain 12J), this protein is 1-(5-phosphoribosyl)-5-[(5-phosphoribosylamino)methylideneamino] imidazole-4-carboxamide isomerase.